A 169-amino-acid polypeptide reads, in one-letter code: Peptide deformylase (169 aa).

Fe cation contacts are provided by Cys-91 and His-133. Residue Glu-134 is part of the active site. His-137 is a binding site for Fe cation.

It belongs to the polypeptide deformylase family. Fe(2+) serves as cofactor.

The catalysed reaction is N-terminal N-formyl-L-methionyl-[peptide] + H2O = N-terminal L-methionyl-[peptide] + formate. In terms of biological role, removes the formyl group from the N-terminal Met of newly synthesized proteins. Requires at least a dipeptide for an efficient rate of reaction. N-terminal L-methionine is a prerequisite for activity but the enzyme has broad specificity at other positions. The chain is Peptide deformylase from Escherichia coli (strain SMS-3-5 / SECEC).